A 226-amino-acid polypeptide reads, in one-letter code: Ras-related protein Rab11A (226 aa).

GTP contacts are provided by residues G24–Q32, S43–T49, D72–Q76, N130–D133, and S160–L162. An Effector region motif is present at residues S46–F54. S-geranylgeranyl cysteine attachment occurs at residues C222 and C223. C223 carries the cysteine methyl ester modification. Positions Q224–S226 are cleaved as a propeptide — removed in mature form.

It belongs to the small GTPase superfamily. Rab family.

It is found in the cell membrane. The chain is Ras-related protein Rab11A (RAB11A) from Lotus japonicus (Lotus corniculatus var. japonicus).